A 354-amino-acid chain; its full sequence is Guanine nucleotide-binding protein G(o) subunit alpha (354 aa).

Gly2 carries N-myristoyl glycine lipidation. Cys3 carries S-palmitoyl cysteine lipidation. Residues 32 to 354 (KDVKLLLLGA…ANNLRGCGLY (323 aa)) enclose the G-alpha domain. Residues 35 to 48 (KLLLLGAGESGKST) form a G1 motif region. 9 residues coordinate GTP: Glu43, Lys46, Ser47, Thr48, Ser152, Leu176, Arg177, Thr178, and Arg179. Position 47 (Ser47) interacts with Mg(2+). The G2 motif stretch occupies residues 174–182 (DILRTRVKT). Thr182 serves as a coordination point for Mg(2+). The segment at 197 to 206 (FRLFDVGGQR) is G3 motif. 5-glutamyl histamine is present on Gln205. Residues 266 to 273 (ILFLNKKD) are G4 motif. GTP is bound by residues Asn270, Asp273, and Cys325. A G5 motif region spans residues 324 to 329 (TCATDT). Residue Asn346 is modified to Deamidated asparagine; in form Alpha-3. A lipid anchor (S-palmitoyl cysteine) is attached at Cys351.

It belongs to the G-alpha family. G(i/o/t/z) subfamily. As to quaternary structure, g proteins are composed of 3 units; alpha, beta and gamma. The alpha chain contains the guanine nucleotide binding site. Forms a complex with GNB1 and GNG3. Interacts with RGS14. Interacts with RGS16. Interacts with RGS19. Interacts (when palmitoylated) with ADGRG3. Deamidation of Asn-346 converts alpha-1 to alpha-3. Post-translationally, histaminylated at Gln-205 residues by TGM2.

The protein resides in the cell membrane. It localises to the membrane. It catalyses the reaction GTP + H2O = GDP + phosphate + H(+). Its activity is regulated as follows. The GTPase activity is promoted by GTPAse activators, such as RGS14, RGS16 and RGS19. In terms of biological role, guanine nucleotide-binding proteins (G proteins) function as transducers downstream of G protein-coupled receptors (GPCRs) in numerous signaling cascades. The alpha chain contains the guanine nucleotide binding site and alternates between an active, GTP-bound state and an inactive, GDP-bound state. Signaling by an activated GPCR promotes GDP release and GTP binding. The alpha subunit has a low GTPase activity that converts bound GTP to GDP, thereby terminating the signal. Both GDP release and GTP hydrolysis are modulated by numerous regulatory proteins. Signaling is mediated via effector proteins, such as adenylate cyclase. Inhibits adenylate cyclase activity, leading to decreased intracellular cAMP levels. This Cricetulus longicaudatus (Long-tailed dwarf hamster) protein is Guanine nucleotide-binding protein G(o) subunit alpha (GNAO1).